We begin with the raw amino-acid sequence, 421 residues long: Gamma-glutamyl phosphate reductase (421 aa).

It belongs to the gamma-glutamyl phosphate reductase family.

The protein localises to the cytoplasm. The catalysed reaction is L-glutamate 5-semialdehyde + phosphate + NADP(+) = L-glutamyl 5-phosphate + NADPH + H(+). It participates in amino-acid biosynthesis; L-proline biosynthesis; L-glutamate 5-semialdehyde from L-glutamate: step 2/2. Functionally, catalyzes the NADPH-dependent reduction of L-glutamate 5-phosphate into L-glutamate 5-semialdehyde and phosphate. The product spontaneously undergoes cyclization to form 1-pyrroline-5-carboxylate. This chain is Gamma-glutamyl phosphate reductase, found in Nitrosospira multiformis (strain ATCC 25196 / NCIMB 11849 / C 71).